We begin with the raw amino-acid sequence, 438 residues long: Putative phospholipase A2 (438 aa).

The active-site Nucleophile is the serine 257. Active-site charge relay system residues include aspartate 291 and histidine 368.

The protein belongs to the serine esterase family.

The protein resides in the cytoplasm. The protein localises to the nucleus. The enzyme catalyses a 1-O-alkyl-2-acetyl-sn-glycero-3-phosphocholine + H2O = a 1-O-alkyl-sn-glycero-3-phosphocholine + acetate + H(+). In Schizosaccharomyces pombe (strain 972 / ATCC 24843) (Fission yeast), this protein is Putative phospholipase A2.